Consider the following 309-residue polypeptide: Agglutinin (309 aa).

M1 carries the N-acetylmethionine modification. Jacalin-type lectin domains are found at residues F4–I148 and P163–Y308.

Belongs to the jacalin lectin family.

In terms of biological role, D-mannose/D-glucose-binding lectin. Binds N-linked high-mannose-type glycans. Has a preference for smaller (Man(2)-Man(6)) high-mannose-type glycans to larger (Man(7)-Man(9)) ones. Recognizes both alpha1-6 extended and alpha1-3 extended monoantennary glycans. The addition of alpha1-2Man to the Man-alpha1-3Man-beta branch results in a significant loss of affinity, but beta1-2GlcNAc has some affinity. Has less affinity for biantennary glycans, and affinity is very weak for the biantennary complex-type N-glycans with bisecting GlcNAc. No affinity is observed for tri- and tetra-antennary glycans. Has mitogenic and hemagglutinating activities. This is Agglutinin from Castanea crenata (Japanese chestnut).